The sequence spans 115 residues: Regulator of ribonuclease activity B (115 aa).

Belongs to the RraB family. In terms of assembly, interacts with the C-terminal region of Rne.

The protein localises to the cytoplasm. Globally modulates RNA abundance by binding to RNase E (Rne) and regulating its endonucleolytic activity. Can modulate Rne action in a substrate-dependent manner by altering the composition of the degradosome. This is Regulator of ribonuclease activity B from Aeromonas hydrophila subsp. hydrophila (strain ATCC 7966 / DSM 30187 / BCRC 13018 / CCUG 14551 / JCM 1027 / KCTC 2358 / NCIMB 9240 / NCTC 8049).